We begin with the raw amino-acid sequence, 455 residues long: MDTNNNIEKEILALIKQKVSPIEYENCLSQLKYNPNASKSDIAFFYAPNMLLCNWITAKHGALLKEILSQNKVGMHLAHSVDVRIEVAPKIQISAQPNINYKAVKTSVKDSYTFENFVVGSCNNTVYEIAKKVAQSDTPPYNPVLFYGGTGLGKTHILNAIGNHALEKHKKVVLVTSEDFLTDFLKHLDNQTMDSFKKKYRHCDFFLLDDAQFLQGKPKLEEEFFHTFNELHANSKQIVLISDRSPKNIAGLEDRLKSRFEWGITAKVMPPDLETKLSIVKQKCQLNKITLPEEVMEYIAQHISDNIRQMEGAIIKISVNANLMNAPIDLNLAKTVLEDLQKDHAEGSSLENILLAVAQSLNLKSSEIKISSRQKNVALARKLVVYFARLYTPNPTLSLAQFLDLKDHSSISKMYSSVKKMLEEEKSPFVLSLREEIKNRLNELNDKKTAFHSSE.

The domain I, interacts with DnaA modulators stretch occupies residues 1–75 (MDTNNNIEKE…EILSQNKVGM (75 aa)). The tract at residues 75–106 (MHLAHSVDVRIEVAPKIQISAQPNINYKAVKT) is domain II. Residues 107–321 (SVKDSYTFEN…GAIIKISVNA (215 aa)) form a domain III, AAA+ region region. ATP-binding residues include Gly151, Gly153, Lys154, and Thr155. The segment at 322–455 (NLMNAPIDLN…DKKTAFHSSE (134 aa)) is domain IV, binds dsDNA.

The protein belongs to the DnaA family. In terms of assembly, oligomerizes as a right-handed, spiral filament on DNA at oriC.

It localises to the cytoplasm. In terms of biological role, plays an essential role in the initiation and regulation of chromosomal replication. ATP-DnaA binds to the origin of replication (oriC) to initiate formation of the DNA replication initiation complex once per cell cycle. Binds the DnaA box (a 9 base pair repeat at the origin) and separates the double-stranded (ds)DNA. Forms a right-handed helical filament on oriC DNA; dsDNA binds to the exterior of the filament while single-stranded (ss)DNA is stabiized in the filament's interior. The ATP-DnaA-oriC complex binds and stabilizes one strand of the AT-rich DNA unwinding element (DUE), permitting loading of DNA polymerase. After initiation quickly degrades to an ADP-DnaA complex that is not apt for DNA replication. Binds acidic phospholipids. This Helicobacter pylori (strain Shi470) protein is Chromosomal replication initiator protein DnaA.